Here is a 146-residue protein sequence, read N- to C-terminus: Aspartate carbamoyltransferase regulatory chain (146 aa).

Residues Cys102, Cys107, Cys131, and Cys134 each coordinate Zn(2+).

Belongs to the PyrI family. As to quaternary structure, contains catalytic and regulatory chains. Zn(2+) is required as a cofactor.

Its function is as follows. Involved in allosteric regulation of aspartate carbamoyltransferase. This Clostridium botulinum (strain Okra / Type B1) protein is Aspartate carbamoyltransferase regulatory chain.